A 181-amino-acid polypeptide reads, in one-letter code: Transcription factor bHLH167 (181 aa).

A disordered region spans residues methionine 1–arginine 22. Residues serine 14–leucine 63 enclose the bHLH domain.

This sequence belongs to the bHLH protein family.

It is found in the nucleus. The protein is Transcription factor bHLH167 of Arabidopsis thaliana (Mouse-ear cress).